Consider the following 373-residue polypeptide: Cobalt-precorrin-5B C(1)-methyltransferase (373 aa).

It belongs to the CbiD family.

The catalysed reaction is Co-precorrin-5B + S-adenosyl-L-methionine = Co-precorrin-6A + S-adenosyl-L-homocysteine. It functions in the pathway cofactor biosynthesis; adenosylcobalamin biosynthesis; cob(II)yrinate a,c-diamide from sirohydrochlorin (anaerobic route): step 6/10. Functionally, catalyzes the methylation of C-1 in cobalt-precorrin-5B to form cobalt-precorrin-6A. The chain is Cobalt-precorrin-5B C(1)-methyltransferase from Halorhodospira halophila (strain DSM 244 / SL1) (Ectothiorhodospira halophila (strain DSM 244 / SL1)).